The chain runs to 340 residues: Methionine import ATP-binding protein MetN 2 (340 aa).

Residues 2 to 241 form the ABC transporter domain; it reads ITLQNVVKEY…PKEKVTQRFV (240 aa). 38–45 contributes to the ATP binding site; it reads GYSGAGKS.

The protein belongs to the ABC transporter superfamily. Methionine importer (TC 3.A.1.24) family. The complex is composed of two ATP-binding proteins (MetN), two transmembrane proteins (MetI) and a solute-binding protein (MetQ).

It localises to the cell membrane. The enzyme catalyses L-methionine(out) + ATP + H2O = L-methionine(in) + ADP + phosphate + H(+). It catalyses the reaction D-methionine(out) + ATP + H2O = D-methionine(in) + ADP + phosphate + H(+). Functionally, part of the ABC transporter complex MetNIQ involved in methionine import. Responsible for energy coupling to the transport system. The polypeptide is Methionine import ATP-binding protein MetN 2 (Listeria innocua serovar 6a (strain ATCC BAA-680 / CLIP 11262)).